Here is a 62-residue protein sequence, read N- to C-terminus: UPF0291 protein CLK_1994 (62 aa).

This sequence belongs to the UPF0291 family.

It localises to the cytoplasm. The chain is UPF0291 protein CLK_1994 from Clostridium botulinum (strain Loch Maree / Type A3).